A 293-amino-acid chain; its full sequence is Protease HtpX homolog (293 aa).

The next 2 helical transmembrane spans lie at 5–25 and 43–63; these read IFLF…TLRL and ALLV…LAMS. His-148 provides a ligand contact to Zn(2+). The active site involves Glu-149. His-152 is a Zn(2+) binding site. 2 consecutive transmembrane segments (helical) span residues 159 to 179 and 199 to 219; these read VTLA…SRII and FVTS…IVMW. Glu-225 serves as a coordination point for Zn(2+).

It belongs to the peptidase M48B family. The cofactor is Zn(2+).

Its subcellular location is the cell inner membrane. The chain is Protease HtpX homolog from Nitrosomonas europaea (strain ATCC 19718 / CIP 103999 / KCTC 2705 / NBRC 14298).